The following is a 103-amino-acid chain: Large ribosomal subunit protein uL24 (103 aa).

The protein belongs to the universal ribosomal protein uL24 family. Part of the 50S ribosomal subunit.

Its function is as follows. One of two assembly initiator proteins, it binds directly to the 5'-end of the 23S rRNA, where it nucleates assembly of the 50S subunit. Functionally, one of the proteins that surrounds the polypeptide exit tunnel on the outside of the subunit. This chain is Large ribosomal subunit protein uL24 (rplX), found in Bacillus spizizenii (strain ATCC 23059 / NRRL B-14472 / W23) (Bacillus subtilis subsp. spizizenii).